Here is a 1249-residue protein sequence, read N- to C-terminus: Hyphally regulated cell wall protein 3 (1249 aa).

Residues 1–20 (MHLFKRIALTLWLIISSTLA) form the signal peptide. Residue Asn373 is glycosylated (N-linked (GlcNAc...) asparagine). The span at 383 to 415 (FPTTSQSSSSETVASSSQPDSSSTEPSAFPSST) shows a compositional bias: low complexity. 2 disordered regions span residues 383–729 (FPTT…SGII) and 883–1217 (GLST…SSAS). The span at 416 to 428 (GDSSAEPSITSDY) shows a compositional bias: polar residues. Residues 429–716 (SSSELSVVPS…SEYTATWTTT (288 aa)) are compositionally biased toward low complexity. N-linked (GlcNAc...) asparagine glycosylation is present at Asn681. Composition is skewed to polar residues over residues 717 to 729 (NSDG…SGII) and 883 to 935 (GLST…PVPT). Residues Asn891, Asn940, Asn944, Asn948, Asn952, Asn956, Asn960, Asn966, Asn970, Asn974, Asn984, Asn988, Asn992, Asn996, Asn1000, Asn1010, Asn1014, Asn1018, Asn1022, Asn1026, Asn1032, Asn1046, Asn1050, Asn1058, Asn1062, Asn1072, Asn1076, Asn1080, Asn1086, Asn1090, Asn1094, Asn1098, Asn1114, Asn1118, Asn1122, Asn1128, Asn1132, Asn1136, Asn1140, Asn1150, Asn1154, Asn1158, Asn1172, Asn1180, and Asn1186 are each glycosylated (N-linked (GlcNAc...) asparagine). Over residues 941–959 (GSNNGSDNGSNNGSNNGSN) the composition is skewed to low complexity. Positions 960 to 982 (NGSGSGNGSNNGSNNGSGSGNGF) are enriched in gly residues. The span at 983–1043 (NNGSDNGSNN…SNSGSDSGNG (61 aa)) shows a compositional bias: low complexity. A compositionally biased stretch (gly residues) spans 1062 to 1078 (NGSGSGGESNNGSGNGS). Over residues 1079–1097 (DNGSSPDNGSNNGSNNGSN) the composition is skewed to low complexity. Residues 1139 to 1167 (NNGSNSGSNSDNGSNNSSGNGSSSDLGSV) show a composition bias toward low complexity. Low complexity-rich tracts occupy residues 1175 to 1194 (NEGS…GAGA) and 1205 to 1217 (SPSA…SSAS). The N-linked (GlcNAc...) asparagine glycan is linked to Asn1225. A lipid anchor (GPI-anchor amidated asparagine) is attached at Asn1225. A propeptide spans 1226 to 1249 (GSGKLLNGKVLTLSVLSSMVVVFL) (removed in mature form).

It belongs to the HYR1/IFF family. In terms of processing, the GPI-anchor is attached to the protein in the endoplasmic reticulum and serves to target the protein to the cell surface. There, the glucosamine-inositol phospholipid moiety is cleaved off and the GPI-modified mannoprotein is covalently attached via its lipidless GPI glycan remnant to the 1,6-beta-glucan of the outer cell wall layer.

It localises to the secreted. It is found in the cell wall. The protein localises to the membrane. GPI-anchored cell wall protein involved in cell wall organization, hyphal growth, as well as in host-fungal interaction and virulence. This Candida albicans (strain SC5314 / ATCC MYA-2876) (Yeast) protein is Hyphally regulated cell wall protein 3 (HYR3).